A 246-amino-acid chain; its full sequence is 1-(5-phosphoribosyl)-5-[(5-phosphoribosylamino)methylideneamino] imidazole-4-carboxamide isomerase (246 aa).

The active-site Proton acceptor is the D8. The Proton donor role is filled by D131.

It belongs to the HisA/HisF family.

The protein localises to the cytoplasm. It carries out the reaction 1-(5-phospho-beta-D-ribosyl)-5-[(5-phospho-beta-D-ribosylamino)methylideneamino]imidazole-4-carboxamide = 5-[(5-phospho-1-deoxy-D-ribulos-1-ylimino)methylamino]-1-(5-phospho-beta-D-ribosyl)imidazole-4-carboxamide. The protein operates within amino-acid biosynthesis; L-histidine biosynthesis; L-histidine from 5-phospho-alpha-D-ribose 1-diphosphate: step 4/9. In Chromobacterium violaceum (strain ATCC 12472 / DSM 30191 / JCM 1249 / CCUG 213 / NBRC 12614 / NCIMB 9131 / NCTC 9757 / MK), this protein is 1-(5-phosphoribosyl)-5-[(5-phosphoribosylamino)methylideneamino] imidazole-4-carboxamide isomerase.